We begin with the raw amino-acid sequence, 463 residues long: L-seryl-tRNA(Sec) selenium transferase (463 aa).

Residue K295 is modified to N6-(pyridoxal phosphate)lysine.

It belongs to the SelA family. As to quaternary structure, homodecamer; pentamer of dimers. Binds only one seryl-tRNA(Sec) per dimer. Pyridoxal 5'-phosphate is required as a cofactor.

It localises to the cytoplasm. The enzyme catalyses L-seryl-tRNA(Sec) + selenophosphate + H(+) = L-selenocysteinyl-tRNA(Sec) + phosphate. Its pathway is aminoacyl-tRNA biosynthesis; selenocysteinyl-tRNA(Sec) biosynthesis; selenocysteinyl-tRNA(Sec) from L-seryl-tRNA(Sec) (bacterial route): step 1/1. Converts seryl-tRNA(Sec) to selenocysteinyl-tRNA(Sec) required for selenoprotein biosynthesis. This is L-seryl-tRNA(Sec) selenium transferase from Escherichia coli O7:K1 (strain IAI39 / ExPEC).